The following is a 149-amino-acid chain: Large ribosomal subunit protein bL20m (149 aa).

A mitochondrion-targeting transit peptide spans 1–9; that stretch reads MVFLSLSRW.

Belongs to the bacterial ribosomal protein bL20 family. As to quaternary structure, component of the mitochondrial ribosome large subunit (39S) which comprises a 16S rRNA and about 50 distinct proteins.

It is found in the mitochondrion. This Xenopus laevis (African clawed frog) protein is Large ribosomal subunit protein bL20m (mrpl20).